We begin with the raw amino-acid sequence, 448 residues long: Cyclic dof factor 3 (448 aa).

The segment at 26-108 (AVTVEDDEED…DGKTLKKPTK (83 aa)) is disordered. Residues 29-39 (VEDDEEDDWSG) are compositionally biased toward acidic residues. Positions 40-54 (GDDKSPEKVTPELSD) are enriched in basic and acidic residues. A compositionally biased stretch (low complexity) spans 55-69 (KNNNNCNDNSFNNSK). Residues 80–99 (STDQIESSDTPEDNQQTTPD) show a composition bias toward polar residues. Residues 110-164 (LPCPRCKSMETKFCYYNNYNINQPRHFCKACQRYWTAGGTMRNVPVGAGRRKNKS) form a Dof-type zinc finger. Zn(2+) contacts are provided by Cys112, Cys115, Cys137, and Cys140. Disordered stretches follow at residues 243–269 (NGDD…AQSG) and 332–370 (SSSP…KQKA). Polar residues-rich tracts occupy residues 246–259 (DCSS…SNNH) and 332–347 (SSSP…NSPT). Residues 351–368 (HPRDEGSSKKDNETERKQ) are compositionally biased toward basic and acidic residues.

Interacts with ADO2 (via kelch repeats) and ADO3 (via kelch repeats). As to expression, expressed in the vasculature of cotyledons and hypocotyls, leaves and roots.

It is found in the nucleus. In terms of biological role, transcription factor that binds specifically to a 5'-AA[AG]G-3' consensus core sequence. Regulates a photoperiodic flowering response. Transcriptional repressor of 'CONSTANS' expression. This is Cyclic dof factor 3 (CDF3) from Arabidopsis thaliana (Mouse-ear cress).